A 315-amino-acid polypeptide reads, in one-letter code: tRNA pseudouridine synthase B (315 aa).

Residue D47 is the Nucleophile of the active site.

This sequence belongs to the pseudouridine synthase TruB family. Type 1 subfamily.

The catalysed reaction is uridine(55) in tRNA = pseudouridine(55) in tRNA. Functionally, responsible for synthesis of pseudouridine from uracil-55 in the psi GC loop of transfer RNAs. This Shewanella pealeana (strain ATCC 700345 / ANG-SQ1) protein is tRNA pseudouridine synthase B.